We begin with the raw amino-acid sequence, 66 residues long: Metallothionein (66 aa).

Serine 1 is subject to N-acetylserine. Residues cysteine 9, cysteine 13, cysteine 18, cysteine 20, cysteine 24, cysteine 26, cysteine 30, cysteine 32, cysteine 35, cysteine 38, cysteine 40, cysteine 45, cysteine 47, cysteine 51, cysteine 57, cysteine 59, cysteine 63, and cysteine 65 each coordinate Cd(2+).

The protein belongs to the metallothionein superfamily. Type 2 family.

Functionally, the metallothioneins are involved in the cellular sequestration of toxic metal ions and regulation of essential trace elements. The sequence is that of Metallothionein from Arianta arbustorum (Land snail).